We begin with the raw amino-acid sequence, 240 residues long: Ribonuclease PH (240 aa).

Residues arginine 87 and 125-127 each bind phosphate; that span reads GTR.

The protein belongs to the RNase PH family. Homohexameric ring arranged as a trimer of dimers.

The enzyme catalyses tRNA(n+1) + phosphate = tRNA(n) + a ribonucleoside 5'-diphosphate. Its function is as follows. Phosphorolytic 3'-5' exoribonuclease that plays an important role in tRNA 3'-end maturation. Removes nucleotide residues following the 3'-CCA terminus of tRNAs; can also add nucleotides to the ends of RNA molecules by using nucleoside diphosphates as substrates, but this may not be physiologically important. Probably plays a role in initiation of 16S rRNA degradation (leading to ribosome degradation) during starvation. The polypeptide is Ribonuclease PH (Dictyoglomus turgidum (strain DSM 6724 / Z-1310)).